Here is a 100-residue protein sequence, read N- to C-terminus: AKSKDDSKPAPPKRPLSAFFLFKQHNYEQVKKENPNAKITELTSMIAEKWKAVGEKEKKKYETLQSEAKAKYEKDMQAYEKKYGKPEKQKKIKKNKKGSK.

Positions Pro12 to Glu80 form a DNA-binding region, HMG box. Residues Lys81–Lys100 form a disordered region. A compositionally biased stretch (basic residues) spans Lys90–Lys100.

The protein resides in the nucleus. The protein localises to the chromosome. The polypeptide is High mobility group protein C (Tetrahymena thermophila).